Reading from the N-terminus, the 85-residue chain is MRTTIRIDDELYREVKAKAARSGRTVAAVLEDAVRRGLNPPKPQAAGRYRVQPSGKGGLRPGVDLSSNAALAEAMNDGVSVDAVR.

The disordered stretch occupies residues 37–60 (GLNPPKPQAAGRYRVQPSGKGGLR).

In terms of biological role, antitoxin component of a type II toxin-antitoxin (TA) system. The sequence is that of Antitoxin VapB43 (vapB43) from Mycobacterium tuberculosis (strain CDC 1551 / Oshkosh).